We begin with the raw amino-acid sequence, 249 residues long: 1-(5-phosphoribosyl)-5-[(5-phosphoribosylamino)methylideneamino] imidazole-4-carboxamide isomerase (249 aa).

Asp-8 acts as the Proton acceptor in catalysis. Asp-129 (proton donor) is an active-site residue.

The protein belongs to the HisA/HisF family.

Its subcellular location is the cytoplasm. It carries out the reaction 1-(5-phospho-beta-D-ribosyl)-5-[(5-phospho-beta-D-ribosylamino)methylideneamino]imidazole-4-carboxamide = 5-[(5-phospho-1-deoxy-D-ribulos-1-ylimino)methylamino]-1-(5-phospho-beta-D-ribosyl)imidazole-4-carboxamide. It functions in the pathway amino-acid biosynthesis; L-histidine biosynthesis; L-histidine from 5-phospho-alpha-D-ribose 1-diphosphate: step 4/9. The protein is 1-(5-phosphoribosyl)-5-[(5-phosphoribosylamino)methylideneamino] imidazole-4-carboxamide isomerase of Nitratidesulfovibrio vulgaris (strain ATCC 29579 / DSM 644 / CCUG 34227 / NCIMB 8303 / VKM B-1760 / Hildenborough) (Desulfovibrio vulgaris).